A 366-amino-acid chain; its full sequence is Holliday junction branch migration complex subunit RuvB (366 aa).

The disordered stretch occupies residues 1 to 49 (MAIISSKKQPPEPNGQPNKRPESAPAAPKEKVLQPEAAIDEQGKQEESI). Positions 13 to 210 (PNGQPNKRPE…FGLIQKLRFY (198 aa)) are large ATPase domain (RuvB-L). ATP-binding positions include Ile49, Arg50, Gly91, Lys94, Thr95, Thr96, 157–159 (EDY), Arg200, Tyr210, and Arg247. Thr95 serves as a coordination point for Mg(2+). The small ATPAse domain (RuvB-S) stretch occupies residues 211 to 281 (EVDELSQIVL…IAAEALQLFQ (71 aa)). The head domain (RuvB-H) stretch occupies residues 284–366 (PCGLDWTDRR…TPPNEQLSLL (83 aa)). Residues Arg339 and Arg344 each contribute to the DNA site.

It belongs to the RuvB family. Homohexamer. Forms an RuvA(8)-RuvB(12)-Holliday junction (HJ) complex. HJ DNA is sandwiched between 2 RuvA tetramers; dsDNA enters through RuvA and exits via RuvB. An RuvB hexamer assembles on each DNA strand where it exits the tetramer. Each RuvB hexamer is contacted by two RuvA subunits (via domain III) on 2 adjacent RuvB subunits; this complex drives branch migration. In the full resolvosome a probable DNA-RuvA(4)-RuvB(12)-RuvC(2) complex forms which resolves the HJ.

The protein localises to the cytoplasm. The enzyme catalyses ATP + H2O = ADP + phosphate + H(+). Its function is as follows. The RuvA-RuvB-RuvC complex processes Holliday junction (HJ) DNA during genetic recombination and DNA repair, while the RuvA-RuvB complex plays an important role in the rescue of blocked DNA replication forks via replication fork reversal (RFR). RuvA specifically binds to HJ cruciform DNA, conferring on it an open structure. The RuvB hexamer acts as an ATP-dependent pump, pulling dsDNA into and through the RuvAB complex. RuvB forms 2 homohexamers on either side of HJ DNA bound by 1 or 2 RuvA tetramers; 4 subunits per hexamer contact DNA at a time. Coordinated motions by a converter formed by DNA-disengaged RuvB subunits stimulates ATP hydrolysis and nucleotide exchange. Immobilization of the converter enables RuvB to convert the ATP-contained energy into a lever motion, pulling 2 nucleotides of DNA out of the RuvA tetramer per ATP hydrolyzed, thus driving DNA branch migration. The RuvB motors rotate together with the DNA substrate, which together with the progressing nucleotide cycle form the mechanistic basis for DNA recombination by continuous HJ branch migration. Branch migration allows RuvC to scan DNA until it finds its consensus sequence, where it cleaves and resolves cruciform DNA. The polypeptide is Holliday junction branch migration complex subunit RuvB (Trichormus variabilis (strain ATCC 29413 / PCC 7937) (Anabaena variabilis)).